A 185-amino-acid polypeptide reads, in one-letter code: MINDILKDAENRMSKTLEVLADDLAKIRTGRAHPDILAHVTIDYYGSATPITQVANVTVLDARTLGITPWEKGLAGKIEKAIITSDLGLNPTNLGDSLRVPMPALNEERRKELVKLVKSETESGRVSIRNIRRDANGDIKELLKEKEITEDEAKRAEDNIQKITDKMIAQADALAVKKEQDLMVV.

Belongs to the RRF family.

It localises to the cytoplasm. Functionally, responsible for the release of ribosomes from messenger RNA at the termination of protein biosynthesis. May increase the efficiency of translation by recycling ribosomes from one round of translation to another. This Francisella philomiragia subsp. philomiragia (strain ATCC 25017 / CCUG 19701 / FSC 153 / O#319-036) protein is Ribosome-recycling factor.